A 448-amino-acid polypeptide reads, in one-letter code: Velvet complex subunit 2 (448 aa).

2 disordered regions span residues 1–153 (MNSA…SKIE) and 224–306 (EPGT…NGYG). The span at 15–34 (PGPAYSSSAPPPIHTYQQHQ) shows a compositional bias: low complexity. 2 stretches are compositionally biased toward pro residues: residues 35–44 (HPPPPLPPPS) and 52–61 (PPLPPPPSAP). Low complexity predominate over residues 96–107 (APYQQSQPSQYP). The segment covering 116 to 132 (VPPPSQHDEPPPPPSSG) has biased composition (pro residues). A Velvet domain is found at 155–431 (GSGWKYSLDV…ANQGIKIPIR (277 aa)). Over residues 260-292 (QQSYGPAPSYPPSSSYGPPQQYYPRHSGYSAEP) the composition is skewed to low complexity.

The protein belongs to the velvet family. VelB subfamily. Component of the heterotrimeric velvet complex composed of LAE1, VE1 and VELB; VE1 acting as a bridging protein between LAE1 and VEL2. Interacts with VE1. Forms a heterodimeric complex with VOS1; the formation of the VELB-VOS1 complex is light-dependent.

Its subcellular location is the nucleus. It localises to the cytoplasm. Functionally, component of the velvet transcription factor complex that controls sexual/asexual developmental ratio in response to light, promoting sexual development in the darkness while stimulating asexual sporulation under illumination. The velvet complex acts as a global regulator for secondary metabolite gene expression. Component of the VELB-VOS1 heterodimeric complex that plays a dual role in activating genes associated with spore maturation and repressing certain development-associated genes. The VELB-VOS1 complex binds DNA through the DNA-binding domain of VOS1 that recognizes an 11-nucleotide consensus sequence 5'-CTGGCCGCGGC-3' consisting of two motifs in the promoters of key developmental regulatory genes. Controls the expression of the fumonisins gene cluster. Involved in cell wall integrity, cell surface hydrophobicity, hyphal polarity and conidiation pattern. Involved in oxidative stress resistance by positively regulating the transcription of the catalase-encoding gene CAT2. This chain is Velvet complex subunit 2, found in Gibberella moniliformis (strain M3125 / FGSC 7600) (Maize ear and stalk rot fungus).